Consider the following 161-residue polypeptide: GTP-dependent dephospho-CoA kinase (161 aa).

6 residues coordinate GTP: Asp37, Ile38, Asp56, Lys58, Glu112, and Asp135.

The protein belongs to the GTP-dependent DPCK family.

The catalysed reaction is 3'-dephospho-CoA + GTP = GDP + CoA + H(+). Its pathway is cofactor biosynthesis; coenzyme A biosynthesis. In terms of biological role, catalyzes the GTP-dependent phosphorylation of the 3'-hydroxyl group of dephosphocoenzyme A to form coenzyme A (CoA). This is GTP-dependent dephospho-CoA kinase from Methanococcus aeolicus (strain ATCC BAA-1280 / DSM 17508 / OCM 812 / Nankai-3).